The primary structure comprises 458 residues: Cysteine--tRNA ligase (458 aa).

Cysteine 33 contributes to the Zn(2+) binding site. The 'HIGH' region motif lies at 35–45 (PTVYDFAHIGN). Residues cysteine 221, histidine 246, and glutamate 250 each coordinate Zn(2+). The 'KMSKS' region motif lies at 279–283 (KMSKS). Lysine 282 provides a ligand contact to ATP.

Belongs to the class-I aminoacyl-tRNA synthetase family. Monomer. Requires Zn(2+) as cofactor.

It is found in the cytoplasm. The catalysed reaction is tRNA(Cys) + L-cysteine + ATP = L-cysteinyl-tRNA(Cys) + AMP + diphosphate. This is Cysteine--tRNA ligase from Rhizobium etli (strain ATCC 51251 / DSM 11541 / JCM 21823 / NBRC 15573 / CFN 42).